A 381-amino-acid polypeptide reads, in one-letter code: MQLPKFNELYKSLILTPSISSLEKELDISNKPVIDLLAAWFSELGFSINITSVPETNGKFNLVATYGQGDGGLLLAGHTDTVPFDDGLWTKDPFQLTEKDDKWYGLGTIDMKGFFAFVLEACKNIDLTKLDKPLRILATADEETTMAGARAIAAAKSFRPDYAVIGEPTSMVPVFMHKGHMSEAIRITGRSGHSSDPANGINAIEIMHQVTGQLLQLQRKLKEQYACDHFVIPQPTLNFGHVHGGDSPNRICGSCELHIDMRPIPGVNPDELFMLLNQALLPIMKQWPGAVDVYHLHEPIPAYACDTDSALIKLAEKLTGETVIPVNYCTEAPFIHTGCDTIVMGPGSINQAHQPDEYLDLSAIKPTQAIIQKLIEQSCKN.

His-78 is a Zn(2+) binding site. Residue Asp-80 is part of the active site. Asp-110 contributes to the Zn(2+) binding site. The active site involves Glu-142. The Zn(2+) site is built by Glu-143, Glu-167, and His-353.

Belongs to the peptidase M20A family. ArgE subfamily. Homodimer. Zn(2+) serves as cofactor. Requires Co(2+) as cofactor. The cofactor is glutathione.

Its subcellular location is the cytoplasm. The enzyme catalyses N(2)-acetyl-L-ornithine + H2O = L-ornithine + acetate. Its pathway is amino-acid biosynthesis; L-arginine biosynthesis; L-ornithine from N(2)-acetyl-L-ornithine (linear): step 1/1. Functionally, catalyzes the hydrolysis of the amide bond of N(2)-acetylated L-amino acids. Cleaves the acetyl group from N-acetyl-L-ornithine to form L-ornithine, an intermediate in L-arginine biosynthesis pathway, and a branchpoint in the synthesis of polyamines. The chain is Acetylornithine deacetylase from Moritella profunda.